We begin with the raw amino-acid sequence, 159 residues long: Phosphopantetheine adenylyltransferase (159 aa).

Thr-10 provides a ligand contact to substrate. ATP-binding positions include 10 to 11 (TF) and His-18. The substrate site is built by Lys-42, Met-74, and Arg-88. ATP-binding positions include 89 to 91 (GLR), Glu-99, and 124 to 130 (WSFISSS).

It belongs to the bacterial CoaD family. As to quaternary structure, homohexamer. The cofactor is Mg(2+).

The protein resides in the cytoplasm. The catalysed reaction is (R)-4'-phosphopantetheine + ATP + H(+) = 3'-dephospho-CoA + diphosphate. It participates in cofactor biosynthesis; coenzyme A biosynthesis; CoA from (R)-pantothenate: step 4/5. Functionally, reversibly transfers an adenylyl group from ATP to 4'-phosphopantetheine, yielding dephospho-CoA (dPCoA) and pyrophosphate. The polypeptide is Phosphopantetheine adenylyltransferase (Yersinia pseudotuberculosis serotype I (strain IP32953)).